Reading from the N-terminus, the 117-residue chain is Large-conductance mechanosensitive channel (117 aa).

The next 3 membrane-spanning stretches (helical) occupy residues 7 to 27, 30 to 50, and 64 to 84; these read EFALKGNVLDLAIAVVMGAAF, IVTSLVTYIIMPLIGKIFGSV, and GLFIQSIIDFIIVAIALFIFV.

It belongs to the MscL family. As to quaternary structure, homopentamer.

Its subcellular location is the cell membrane. Channel that opens in response to stretch forces in the membrane lipid bilayer. May participate in the regulation of osmotic pressure changes within the cell. This chain is Large-conductance mechanosensitive channel, found in Staphylococcus haemolyticus (strain JCSC1435).